The following is a 623-amino-acid chain: Keratin, type I cytoskeletal 9 (623 aa).

Residues 1-13 (MSCRQFSSSYLSR) are compositionally biased toward low complexity. The disordered stretch occupies residues 1–25 (MSCRQFSSSYLSRSGGGGGGGLGSG). A head region spans residues 1 to 152 (MSCRQFSSSY…GGDGGILTAN (152 aa)). Phosphoserine occurs at positions 14 and 57. Gly residues predominate over residues 14-25 (SGGGGGGGLGSG). The segment at 153–188 (EKSTMQELNSRLASYLDKVQALEEANNDLENKIQDW) is coil 1A. The region spanning 153 to 465 (EKSTMQELNS…NLLEGGQEDF (313 aa)) is the IF rod domain. Positions 189 to 207 (YDKKGPAAIQKNYSPYYNT) are linker 1. The tract at residues 208-299 (IDDLKDQIVD…KNHKEEMSQL (92 aa)) is coil 1B. Positions 300–322 (TGQNSGDVNVEINVAPGKDLTKT) are linker 12. Residues 323–461 (LNDMRQEYEQ…ETYHNLLEGG (139 aa)) are coil 2. Disordered regions lie at residues 462-496 (QEDF…SGGS) and 534-623 (YGGG…SSHS). The segment at 462-623 (QEDFESSGAG…GGGSGKSSHS (162 aa)) is tail. Over residues 471–496 (GKIGLGGRGGSGGSYGRGSRGGSGGS) the composition is skewed to gly residues.

It belongs to the intermediate filament family. In terms of assembly, heterotetramer of two type I and two type II keratins. Expressed in the terminally differentiated epidermis of palms and soles.

Functionally, may serve an important special function either in the mature palmar and plantar skin tissue or in the morphogenetic program of the formation of these tissues. Plays a role in keratin filament assembly. This chain is Keratin, type I cytoskeletal 9 (KRT9), found in Homo sapiens (Human).